Consider the following 555-residue polypeptide: Probable Xaa-Pro aminopeptidase BC1G_13431 (555 aa).

Positions 303, 314, 458, and 499 each coordinate Mn(2+). Residues 527-555 (EGKEQEEEEEREANRKATESRKQKKTWFW) are disordered. Basic and acidic residues predominate over residues 538–547 (EANRKATESR).

The protein belongs to the peptidase M24B family. The cofactor is Mn(2+).

The enzyme catalyses Release of any N-terminal amino acid, including proline, that is linked to proline, even from a dipeptide or tripeptide.. Catalyzes the removal of a penultimate prolyl residue from the N-termini of peptides. In Botryotinia fuckeliana (strain B05.10) (Noble rot fungus), this protein is Probable Xaa-Pro aminopeptidase BC1G_13431.